Reading from the N-terminus, the 297-residue chain is Probable GTP 3',8-cyclase (297 aa).

In terms of domain architecture, Radical SAM core spans 4–227 (RYGRQIRSFR…MQNRKKYVID (224 aa)). Residue Arg-13 participates in GTP binding. The [4Fe-4S] cluster site is built by Cys-20 and Cys-24. Position 26 (Tyr-26) interacts with S-adenosyl-L-methionine. [4Fe-4S] cluster is bound at residue Cys-27. A GTP-binding site is contributed by Lys-61. Gly-65 contacts S-adenosyl-L-methionine. Thr-91 contributes to the GTP binding site. Residue Ser-115 participates in S-adenosyl-L-methionine binding. Residue Lys-152 coordinates GTP. [4Fe-4S] cluster-binding residues include Cys-243 and Cys-246. 248-250 (RIR) is a binding site for GTP. Cys-260 lines the [4Fe-4S] cluster pocket.

Belongs to the radical SAM superfamily. MoaA family. [4Fe-4S] cluster is required as a cofactor.

It carries out the reaction GTP + AH2 + S-adenosyl-L-methionine = (8S)-3',8-cyclo-7,8-dihydroguanosine 5'-triphosphate + 5'-deoxyadenosine + L-methionine + A + H(+). It participates in cofactor biosynthesis; molybdopterin biosynthesis. In terms of biological role, catalyzes the cyclization of GTP to (8S)-3',8-cyclo-7,8-dihydroguanosine 5'-triphosphate. This chain is Probable GTP 3',8-cyclase, found in Methanococcus maripaludis (strain DSM 14266 / JCM 13030 / NBRC 101832 / S2 / LL).